The sequence spans 258 residues: tRNA pseudouridine synthase A (258 aa).

D52 functions as the Nucleophile in the catalytic mechanism. Y110 lines the substrate pocket.

This sequence belongs to the tRNA pseudouridine synthase TruA family. Homodimer.

The catalysed reaction is uridine(38/39/40) in tRNA = pseudouridine(38/39/40) in tRNA. Formation of pseudouridine at positions 38, 39 and 40 in the anticodon stem and loop of transfer RNAs. This chain is tRNA pseudouridine synthase A, found in Francisella tularensis subsp. novicida (strain U112).